We begin with the raw amino-acid sequence, 482 residues long: tRNA sulfurtransferase (482 aa).

Positions 61–165 (LAIRDALTRI…DDRLLLIKGR (105 aa)) constitute a THUMP domain. ATP-binding positions include 183–184 (LI), Lys-265, Gly-287, and Gln-296. Cys-344 and Cys-456 are joined by a disulfide. Positions 404-482 (FGPNDVILDI…GFANVKVYRP (79 aa)) constitute a Rhodanese domain. The Cysteine persulfide intermediate role is filled by Cys-456.

This sequence belongs to the ThiI family.

It localises to the cytoplasm. The catalysed reaction is [ThiI sulfur-carrier protein]-S-sulfanyl-L-cysteine + a uridine in tRNA + 2 reduced [2Fe-2S]-[ferredoxin] + ATP + H(+) = [ThiI sulfur-carrier protein]-L-cysteine + a 4-thiouridine in tRNA + 2 oxidized [2Fe-2S]-[ferredoxin] + AMP + diphosphate. It catalyses the reaction [ThiS sulfur-carrier protein]-C-terminal Gly-Gly-AMP + S-sulfanyl-L-cysteinyl-[cysteine desulfurase] + AH2 = [ThiS sulfur-carrier protein]-C-terminal-Gly-aminoethanethioate + L-cysteinyl-[cysteine desulfurase] + A + AMP + 2 H(+). It participates in cofactor biosynthesis; thiamine diphosphate biosynthesis. Its function is as follows. Catalyzes the ATP-dependent transfer of a sulfur to tRNA to produce 4-thiouridine in position 8 of tRNAs, which functions as a near-UV photosensor. Also catalyzes the transfer of sulfur to the sulfur carrier protein ThiS, forming ThiS-thiocarboxylate. This is a step in the synthesis of thiazole, in the thiamine biosynthesis pathway. The sulfur is donated as persulfide by IscS. The chain is tRNA sulfurtransferase from Salmonella heidelberg (strain SL476).